Consider the following 282-residue polypeptide: Phosphatidylserine decarboxylase proenzyme (282 aa).

Active-site charge relay system; for autoendoproteolytic cleavage activity residues include Asp85, His142, and Ser244. The active-site Schiff-base intermediate with substrate; via pyruvic acid; for decarboxylase activity is Ser244. Ser244 carries the post-translational modification Pyruvic acid (Ser); by autocatalysis.

This sequence belongs to the phosphatidylserine decarboxylase family. PSD-B subfamily. Prokaryotic type I sub-subfamily. As to quaternary structure, heterodimer of a large membrane-associated beta subunit and a small pyruvoyl-containing alpha subunit. It depends on pyruvate as a cofactor. Post-translationally, is synthesized initially as an inactive proenzyme. Formation of the active enzyme involves a self-maturation process in which the active site pyruvoyl group is generated from an internal serine residue via an autocatalytic post-translational modification. Two non-identical subunits are generated from the proenzyme in this reaction, and the pyruvate is formed at the N-terminus of the alpha chain, which is derived from the carboxyl end of the proenzyme. The autoendoproteolytic cleavage occurs by a canonical serine protease mechanism, in which the side chain hydroxyl group of the serine supplies its oxygen atom to form the C-terminus of the beta chain, while the remainder of the serine residue undergoes an oxidative deamination to produce ammonia and the pyruvoyl prosthetic group on the alpha chain. During this reaction, the Ser that is part of the protease active site of the proenzyme becomes the pyruvoyl prosthetic group, which constitutes an essential element of the active site of the mature decarboxylase.

Its subcellular location is the cell membrane. It carries out the reaction a 1,2-diacyl-sn-glycero-3-phospho-L-serine + H(+) = a 1,2-diacyl-sn-glycero-3-phosphoethanolamine + CO2. It functions in the pathway phospholipid metabolism; phosphatidylethanolamine biosynthesis; phosphatidylethanolamine from CDP-diacylglycerol: step 2/2. In terms of biological role, catalyzes the formation of phosphatidylethanolamine (PtdEtn) from phosphatidylserine (PtdSer). In Coxiella burnetii (strain Dugway 5J108-111), this protein is Phosphatidylserine decarboxylase proenzyme.